The sequence spans 729 residues: Neurochondrin (729 aa).

Ser2 is modified (N-acetylserine). Residue Ser2 is modified to Phosphoserine. Residues Cys3 and Cys4 are each lipidated (S-palmitoyl cysteine). Arg75 carries the asymmetric dimethylarginine modification. Position 448 is a phosphoserine (Ser448).

This sequence belongs to the neurochondrin family. In terms of assembly, interacts with MCHR1. Interacts with SEMA4C. Interacts with DIAPH1 (via FH3 domain). Interacts with GRM5. Palmitoylated. Palmitoylation by ZDHHC1, ZDHHC3 and ZDHHC11 regulates the association of NCDN with endosome membranes. May also be palmitoylated by ZDHHC7. Expressed in brain and in peripheral nervous system (at protein level). Weakly expressed in neurites.

Its subcellular location is the cytoplasm. It localises to the cytosol. It is found in the endosome membrane. The protein localises to the cell projection. The protein resides in the dendrite. Its subcellular location is the postsynapse. In terms of biological role, probably involved in signal transduction, in the nervous system, via increasing cell surface localization of GRM5 and positively regulating its signaling. Required for the spatial learning process. Acts as a negative regulator of Ca(2+)-calmodulin-dependent protein kinase 2 (CaMK2) phosphorylation. May play a role in modulating melanin-concentrating hormone-mediated functions via its interaction with MCHR1 that interferes with G protein-coupled signal transduction. May be involved in bone metabolism. May also be involved in neurite outgrowth. This Rattus norvegicus (Rat) protein is Neurochondrin (Ncdn).